The primary structure comprises 294 residues: MINGSIVALITPMNSDGSIDFASLERLVEFHIDQGTDAIVAVGTTGESATLPMSEHVTVVAQTVKFAAGRIPVIGGNGANATAEAIELTKSLSKVGVAGMLGVTPYYNKPTPKGLIAHYKAVAASTDIPQILYNVPGRTAVDMQPETVAELVGVSNIIGVKEATGDIARVKRLRELCGNDFKLYSGDDATAREFLLLGGNGVISVANNIVPKAFKAMCDAALAGNAELALSLDTPLRGLYSTLFCEANPIPVKWAAHRMGLIKCGHIRLPLTELSEQCHGLLIDAMTRAQIEVK.

Residue threonine 45 coordinates pyruvate. Tyrosine 133 serves as the catalytic Proton donor/acceptor. Lysine 161 acts as the Schiff-base intermediate with substrate in catalysis. Isoleucine 203 is a pyruvate binding site.

Belongs to the DapA family. In terms of assembly, homotetramer; dimer of dimers.

The protein localises to the cytoplasm. The catalysed reaction is L-aspartate 4-semialdehyde + pyruvate = (2S,4S)-4-hydroxy-2,3,4,5-tetrahydrodipicolinate + H2O + H(+). The protein operates within amino-acid biosynthesis; L-lysine biosynthesis via DAP pathway; (S)-tetrahydrodipicolinate from L-aspartate: step 3/4. Functionally, catalyzes the condensation of (S)-aspartate-beta-semialdehyde [(S)-ASA] and pyruvate to 4-hydroxy-tetrahydrodipicolinate (HTPA). The sequence is that of 4-hydroxy-tetrahydrodipicolinate synthase from Shewanella sp. (strain W3-18-1).